The primary structure comprises 378 residues: TelA-like protein SAS1347 (378 aa).

Belongs to the TelA family.

The chain is TelA-like protein SAS1347 from Staphylococcus aureus (strain MSSA476).